Here is a 328-residue protein sequence, read N- to C-terminus: Beta-ketoacyl-[acyl-carrier-protein] synthase III (328 aa).

Catalysis depends on residues cysteine 114 and histidine 253. Positions 254 to 258 are ACP-binding; it reads QANIR. Residue asparagine 283 is part of the active site.

This sequence belongs to the thiolase-like superfamily. FabH family. As to quaternary structure, homodimer.

The protein localises to the cytoplasm. The enzyme catalyses malonyl-[ACP] + acetyl-CoA + H(+) = 3-oxobutanoyl-[ACP] + CO2 + CoA. Its pathway is lipid metabolism; fatty acid biosynthesis. Its function is as follows. Catalyzes the condensation reaction of fatty acid synthesis by the addition to an acyl acceptor of two carbons from malonyl-ACP. Catalyzes the first condensation reaction which initiates fatty acid synthesis and may therefore play a role in governing the total rate of fatty acid production. Possesses both acetoacetyl-ACP synthase and acetyl transacylase activities. Its substrate specificity determines the biosynthesis of branched-chain and/or straight-chain of fatty acids. The polypeptide is Beta-ketoacyl-[acyl-carrier-protein] synthase III (Clostridioides difficile (strain 630) (Peptoclostridium difficile)).